The chain runs to 118 residues: Thioredoxin H3 (118 aa).

At Ala-2 the chain carries N-acetylalanine. The Thioredoxin domain occupies 2 to 113; sequence AAEGEVIACH…IIANLEKHKT (112 aa). Residues Cys-39 and Cys-42 each act as nucleophile in the active site. Cysteines 39 and 42 form a disulfide.

It belongs to the thioredoxin family. Plant H-type subfamily. In terms of assembly, interacts with FBA5 and FBA8. Interacts with FBA6. Interacts with MDH1.

It localises to the cytoplasm. Thiol-disulfide oxidoreductase that possesses disulfide reductase and insulin disulfide bonds reducing activities. Heat shock causes oligomerization and formation of high molecular weight (HMW) complexes with concomitant functional switching from a disulfide reductase to chaperone. In Arabidopsis thaliana (Mouse-ear cress), this protein is Thioredoxin H3 (TRX3).